The chain runs to 872 residues: Protein translocase subunit SecA (872 aa).

Residues glutamine 87, 105–109 (GEGKT), and aspartate 510 each bind ATP. Residues cysteine 847, cysteine 849, cysteine 858, and cysteine 859 each contribute to the Zn(2+) site.

It belongs to the SecA family. In terms of assembly, monomer and homodimer. Part of the essential Sec protein translocation apparatus which comprises SecA, SecYEG and auxiliary proteins SecDF-YajC and YidC. Requires Zn(2+) as cofactor.

The protein resides in the cell inner membrane. It is found in the cytoplasm. The catalysed reaction is ATP + H2O + cellular proteinSide 1 = ADP + phosphate + cellular proteinSide 2.. Its function is as follows. Part of the Sec protein translocase complex. Interacts with the SecYEG preprotein conducting channel. Has a central role in coupling the hydrolysis of ATP to the transfer of proteins into and across the cell membrane, serving as an ATP-driven molecular motor driving the stepwise translocation of polypeptide chains across the membrane. The chain is Protein translocase subunit SecA from Aliarcobacter butzleri (strain RM4018) (Arcobacter butzleri).